The following is a 205-amino-acid chain: Large ribosomal subunit protein bL21 (205 aa).

Positions 107 to 137 are disordered; the sequence is APAKKAAAKKEEAPKADTAPKAAAAPTEEAA. Residues 122-137 are compositionally biased toward low complexity; it reads ADTAPKAAAAPTEEAA.

Belongs to the bacterial ribosomal protein bL21 family. Part of the 50S ribosomal subunit. Contacts protein L20.

In terms of biological role, this protein binds to 23S rRNA in the presence of protein L20. The protein is Large ribosomal subunit protein bL21 of Hyphomonas neptunium (strain ATCC 15444).